The following is a 275-amino-acid chain: uncharacterized protein (275 aa).

Mg(2+) is bound by residues E71, D85, I87, and D88. E71 contributes to the substrate binding site. Residue 87–90 coordinates substrate; it reads IDGT. Helical transmembrane passes span 87–107, 112–132, and 178–198; these read IDGTANFLSGIPLWAVSIAFV, PVLGAVALPALDTLLWASVDG, and IVCLGSCAAALAMVAAGRLAG. D208 serves as a coordination point for Mg(2+). D208 lines the substrate pocket.

It belongs to the inositol monophosphatase superfamily.

The protein localises to the cell membrane. This is an uncharacterized protein from Sinorhizobium fredii (strain NBRC 101917 / NGR234).